We begin with the raw amino-acid sequence, 299 residues long: 4-hydroxy-tetrahydrodipicolinate synthase (299 aa).

A pyruvate-binding site is contributed by Thr44. Residue Tyr133 is the Proton donor/acceptor of the active site. Catalysis depends on Lys162, which acts as the Schiff-base intermediate with substrate. Pyruvate is bound at residue Ile204.

Belongs to the DapA family. In terms of assembly, homotetramer; dimer of dimers.

It is found in the cytoplasm. The enzyme catalyses L-aspartate 4-semialdehyde + pyruvate = (2S,4S)-4-hydroxy-2,3,4,5-tetrahydrodipicolinate + H2O + H(+). It participates in amino-acid biosynthesis; L-lysine biosynthesis via DAP pathway; (S)-tetrahydrodipicolinate from L-aspartate: step 3/4. Catalyzes the condensation of (S)-aspartate-beta-semialdehyde [(S)-ASA] and pyruvate to 4-hydroxy-tetrahydrodipicolinate (HTPA). The protein is 4-hydroxy-tetrahydrodipicolinate synthase of Thermus thermophilus (strain ATCC 27634 / DSM 579 / HB8).